A 336-amino-acid polypeptide reads, in one-letter code: Nicotinate-nucleotide--dimethylbenzimidazole phosphoribosyltransferase (336 aa).

Catalysis depends on glutamate 304, which acts as the Proton acceptor.

It belongs to the CobT family.

The catalysed reaction is 5,6-dimethylbenzimidazole + nicotinate beta-D-ribonucleotide = alpha-ribazole 5'-phosphate + nicotinate + H(+). It functions in the pathway nucleoside biosynthesis; alpha-ribazole biosynthesis; alpha-ribazole from 5,6-dimethylbenzimidazole: step 1/2. Functionally, catalyzes the synthesis of alpha-ribazole-5'-phosphate from nicotinate mononucleotide (NAMN) and 5,6-dimethylbenzimidazole (DMB). The chain is Nicotinate-nucleotide--dimethylbenzimidazole phosphoribosyltransferase from Mesorhizobium japonicum (strain LMG 29417 / CECT 9101 / MAFF 303099) (Mesorhizobium loti (strain MAFF 303099)).